Here is a 259-residue protein sequence, read N- to C-terminus: Phosphatidate cytidylyltransferase (259 aa).

The next 7 membrane-spanning stretches (helical) occupy residues 31–51 (LVIFLPKSLFLLVILFLCFAI), 69–89 (PLVLLTYYFADPLVFPLIGLL), 103–123 (FFKSTFLLFYPALFLVYLIKI), 129–149 (YYLLIFIFGIWINDVFAYYIG), 170–190 (FLGGVLFGSLFFALTLPYGIL), 193–213 (FLLGTFVLTVGVAGDYFKSFI), and 236–256 (FDALVFSAPVFYLIMCAGELN).

Belongs to the CDS family.

It localises to the cell membrane. The catalysed reaction is a 1,2-diacyl-sn-glycero-3-phosphate + CTP + H(+) = a CDP-1,2-diacyl-sn-glycerol + diphosphate. Its pathway is phospholipid metabolism; CDP-diacylglycerol biosynthesis; CDP-diacylglycerol from sn-glycerol 3-phosphate: step 3/3. The polypeptide is Phosphatidate cytidylyltransferase (cdsA) (Aquifex aeolicus (strain VF5)).